The sequence spans 874 residues: Eukaryotic translation initiation factor 3 subunit C (874 aa).

The tract at residues 1-70 (MSRFFVSGYT…DGRPSGPAYF (70 aa)) is disordered. A compositionally biased stretch (acidic residues) spans 14–61 (SSEEEDLLSTSEEELLSSSDEGEDNESDSSFFGEDDDESEESSSDDED). Positions 598–774 (FHQHINLELL…KFISFTSTTE (177 aa)) constitute a PCI domain. The interval 797–874 (KNEKTQSNGY…SNNDEFQATA (78 aa)) is disordered. Residues 813–848 (KDQQNQQQQNQNQNQQQQQNQQQQQQQQSSQQQSNN) are compositionally biased toward low complexity. The span at 862–874 (NVNSNNDEFQATA) shows a compositional bias: polar residues.

It belongs to the eIF-3 subunit C family. Component of the eukaryotic translation initiation factor 3 (eIF-3) complex.

The protein localises to the cytoplasm. In terms of biological role, component of the eukaryotic translation initiation factor 3 (eIF-3) complex, which is involved in protein synthesis of a specialized repertoire of mRNAs and, together with other initiation factors, stimulates binding of mRNA and methionyl-tRNAi to the 40S ribosome. The eIF-3 complex specifically targets and initiates translation of a subset of mRNAs involved in cell proliferation. In Candida albicans (strain SC5314 / ATCC MYA-2876) (Yeast), this protein is Eukaryotic translation initiation factor 3 subunit C.